A 1798-amino-acid polypeptide reads, in one-letter code: Focadhesin (1798 aa).

An N6-acetyllysine modification is found at K816.

Interacts with VCL. As to expression, expressed by glial and neuronal cells in brain.

Its subcellular location is the cell junction. It localises to the focal adhesion. The protein resides in the cytoplasm. It is found in the cytosol. Its function is as follows. Required for the maintenance of SKIC2 and SKIC3 proteostatic levels in the liver. May be involved in the regulation of RNA degradation by the exosome complex. Potential tumor suppressor in gliomas. This is Focadhesin (Focad) from Mus musculus (Mouse).